Reading from the N-terminus, the 139-residue chain is uncharacterized protein (139 aa).

Its subcellular location is the host cytoplasm. This is an uncharacterized protein from Enterobacteriaceae (Bacteriophage Mu).